The primary structure comprises 872 residues: Alanine--tRNA ligase (872 aa).

Residues His567, His571, Cys669, and His673 each contribute to the Zn(2+) site.

It belongs to the class-II aminoacyl-tRNA synthetase family. It depends on Zn(2+) as a cofactor.

The protein localises to the cytoplasm. The enzyme catalyses tRNA(Ala) + L-alanine + ATP = L-alanyl-tRNA(Ala) + AMP + diphosphate. Catalyzes the attachment of alanine to tRNA(Ala) in a two-step reaction: alanine is first activated by ATP to form Ala-AMP and then transferred to the acceptor end of tRNA(Ala). Also edits incorrectly charged Ser-tRNA(Ala) and Gly-tRNA(Ala) via its editing domain. This chain is Alanine--tRNA ligase, found in Streptococcus gordonii (strain Challis / ATCC 35105 / BCRC 15272 / CH1 / DL1 / V288).